Here is a 460-residue protein sequence, read N- to C-terminus: Cation efflux system protein CusC (460 aa).

The signal sequence occupies residues 1-17; sequence MSPCKLLPFCVALALTG. C18 carries the N-palmitoyl cysteine lipid modification. Residue C18 is the site of S-diacylglycerol cysteine attachment.

This sequence belongs to the outer membrane factor (OMF) (TC 1.B.17) family. In terms of assembly, homotrimer. Component of the cus efflux system composed of CusA, CusB, CusC and CusF.

Its subcellular location is the cell outer membrane. Forms pores that allow passive diffusion of cations across the outer membrane. Part of a cation efflux system that mediates resistance to copper and silver. This Escherichia coli O157:H7 protein is Cation efflux system protein CusC (cusC).